We begin with the raw amino-acid sequence, 65 residues long: Large ribosomal subunit protein uL29 (65 aa).

Belongs to the universal ribosomal protein uL29 family.

This is Large ribosomal subunit protein uL29 from Mycoplasmopsis pulmonis (strain UAB CTIP) (Mycoplasma pulmonis).